The following is a 407-amino-acid chain: Growth/differentiation factor 11 (407 aa).

Residues Met-1 to Ala-24 form the signal peptide. The propeptide occupies Ala-25–Arg-298. N-linked (GlcNAc...) asparagine glycosylation is present at Asn-94. 4 disulfides stabilise this stretch: Cys-304–Cys-314, Cys-313–Cys-372, Cys-341–Cys-404, and Cys-345–Cys-406.

This sequence belongs to the TGF-beta family. In terms of assembly, homodimer; disulfide-linked. Interacts directly with ACVR2B. Interacts directly with ACVR2A. Interacts with ACVR1B, TGFBR1 and ACVR1C in an ACVR2B-dependent manner. Interacts with FST isoform 2/FS-288. In terms of processing, synthesized as large precursor molecule that undergoes proteolytic cleavage by furin-like proteases. This produces an inactive form consisting of the mature C-terminal portion non-covalently bound to its cleaved N-terminal propeptide. Activation of the mature form requires additional cleavage of the propeptide by a tolloid-like metalloproteinase. In the embryo, strong expression is seen in the palatal epithelia, including the medial edge epithelial and midline epithelial seam of the palatal shelves. Less pronounced expression is also seen throughout the palatal shelf and tongue mesenchyme.

The protein localises to the secreted. Secreted signal that acts globally to regulate anterior/posterior axial patterning during development. May play critical roles in patterning both mesodermal and neural tissues. It is required for proper vertebral patterning and orofacial development. Signals through activin receptors type-2, ACVR2A and ACVR2B, and activin receptors type-1, ACVR1B, ACVR1C and TGFBR1 leading to the phosphorylation of SMAD2 and SMAD3. In Homo sapiens (Human), this protein is Growth/differentiation factor 11 (GDF11).